The primary structure comprises 2621 residues: Nonribosomal peptide synthetase dtpA (2621 aa).

An adenylation 1 region spans residues 446–844; that stretch reads CMEQPNAEAI…GRKDQQVKIR (399 aa). Positions 978–1054 constitute a Carrier 1 domain; that stretch reads QPYTQVEETL…EVALYSRALS (77 aa). Serine 1015 is subject to O-(pantetheine 4'-phosphoryl)serine. A condensation 1 region spans residues 1095 to 1506; it reads EDIYPCTALQ…LNQLELAGPQ (412 aa). The adenylation 2 stretch occupies residues 1534-1930; it reads SRTQPGASAI…GRRDNQVKLR (397 aa). A Carrier 2 domain is found at 2071-2147; it reads QPSTTQEALV…LFCTNASTSI (77 aa). Serine 2108 carries the post-translational modification O-(pantetheine 4'-phosphoryl)serine. A condensation 2 region spans residues 2220-2618; that stretch reads AIFKLHGSKV…HSARPIASID (399 aa).

The protein belongs to the NRP synthetase family.

It participates in alkaloid biosynthesis. In terms of biological role, nonribosomal peptide synthetase; part of the gene cluster that mediates the biosynthesis of the dimeric diketopiperazine alkaloid ditryptophenaline. The nonribosomal peptide synthase dtpA accepts L-tryptophan and L-phenylalanine as its substrates and forms the phenylalanyl-tryptophanyl cyclic dipeptide product cyclophenylalanyltryptophenyl. The N-methyltransferase dtpB is responsible for the N-methylation of cyclophenylalanyltryptophenyl to yield cyclo-N-methylphenylalanyltryptophenyl. The cytochrome P450 monooxygenase is responsible not only for pyrroloindole ring formation but also for concurrent dimerization of N-methylphenylalanyltryptophanyl diketopiperazine monomers into a homodimeric product. The polypeptide is Nonribosomal peptide synthetase dtpA (Aspergillus flavus (strain ATCC 200026 / FGSC A1120 / IAM 13836 / NRRL 3357 / JCM 12722 / SRRC 167)).